A 190-amino-acid chain; its full sequence is Subtilisin inhibitor CLSI-II (190 aa).

2 disulfide bridges follow: cysteine 44–cysteine 88 and cysteine 142–cysteine 149.

Belongs to the protease inhibitor I3 (leguminous Kunitz-type inhibitor) family. Forms active dimers on storage in aqueous solution, possibly through formation of an intermolecular disulfide bond. Post-translationally, the N-terminal Asn is removed in about 50% of both the CLSI-II and CLSI-III chains.

It localises to the secreted. Inhibits subtilisin-type microbial serine proteases incuding proteinase K, subtilisin BPN', subtilisin Carlsberg and subtilisin E in a non-stoichiometric manner. Weakly inhibits A.oryzae protease and some metalloproteases including pronase E. Does not inhibit trypsin, chymotrypsin, S.griseus alkaline protease or A.lyticus lysyl endopeptidase. CLSI-II has a wider inhibitory specificity than CLSI-III. This chain is Subtilisin inhibitor CLSI-II, found in Canavalia lineata (Beach bean).